Reading from the N-terminus, the 285-residue chain is 4-hydroxybenzoate octaprenyltransferase (285 aa).

9 consecutive transmembrane segments (helical) span residues 19–39 (IGSL…ADGL), 42–62 (WHVL…GCVI), 82–102 (LPSG…LVVC), 104–124 (FLLV…GIVL), 136–156 (YLPQ…AYAA), 166–186 (WLLF…YAMV), 210–230 (IIGL…SQLA), 233–253 (GIYY…QWLI), and 265–285 (FLNN…SVLI).

This sequence belongs to the UbiA prenyltransferase family. Mg(2+) is required as a cofactor.

The protein localises to the cell inner membrane. It catalyses the reaction all-trans-octaprenyl diphosphate + 4-hydroxybenzoate = 4-hydroxy-3-(all-trans-octaprenyl)benzoate + diphosphate. Its pathway is cofactor biosynthesis; ubiquinone biosynthesis. Its function is as follows. Catalyzes the prenylation of para-hydroxybenzoate (PHB) with an all-trans polyprenyl group. Mediates the second step in the final reaction sequence of ubiquinone-8 (UQ-8) biosynthesis, which is the condensation of the polyisoprenoid side chain with PHB, generating the first membrane-bound Q intermediate 3-octaprenyl-4-hydroxybenzoate. The polypeptide is 4-hydroxybenzoate octaprenyltransferase (Aliivibrio fischeri (strain ATCC 700601 / ES114) (Vibrio fischeri)).